The chain runs to 319 residues: FAD-dependent oxidoreductase FVFD30 (319 aa).

Positions 6, 18, and 25 each coordinate FAD. NAD(+)-binding residues include Lys-129 and Gly-188. NADP(+) contacts are provided by Lys-129 and Gly-188. FAD is bound by residues Asp-228 and Tyr-265. Asp-228 contributes to the 6-hydroxy-FAD binding site. Residue Tyr-265 coordinates NAD(+). Tyr-265 serves as a coordination point for NADP(+). A helical membrane pass occupies residues 281–301 (GVGYFGVWWGIVIGGWLASLL).

This sequence belongs to the FAD-dependent oxidoreductase family.

It is found in the membrane. Probable FAD-dependent oxidoreductase that plays a role in the regulation of fruiting body development. This is FAD-dependent oxidoreductase FVFD30 from Flammulina velutipes (Agaricus velutipes).